The following is a 350-amino-acid chain: Glycerol-1-phosphate dehydrogenase [NAD(P)+] (350 aa).

NAD(+) is bound by residues 94–98 (GKPID) and 116–119 (TVAS). A substrate-binding site is contributed by Asp-121. Ser-125 lines the NAD(+) pocket. Asp-168 is a binding site for substrate. Zn(2+) contacts are provided by Asp-168 and His-248. His-252 is a binding site for substrate. His-264 contributes to the Zn(2+) binding site.

The protein belongs to the glycerol-1-phosphate dehydrogenase family. Zn(2+) is required as a cofactor.

The protein localises to the cytoplasm. The enzyme catalyses sn-glycerol 1-phosphate + NAD(+) = dihydroxyacetone phosphate + NADH + H(+). The catalysed reaction is sn-glycerol 1-phosphate + NADP(+) = dihydroxyacetone phosphate + NADPH + H(+). It functions in the pathway membrane lipid metabolism; glycerophospholipid metabolism. In terms of biological role, catalyzes the NAD(P)H-dependent reduction of dihydroxyacetonephosphate (DHAP or glycerone phosphate) to glycerol 1-phosphate (G1P). The G1P thus generated is used as the glycerophosphate backbone of phospholipids in the cellular membranes of Archaea. The polypeptide is Glycerol-1-phosphate dehydrogenase [NAD(P)+] (Halorubrum lacusprofundi (strain ATCC 49239 / DSM 5036 / JCM 8891 / ACAM 34)).